We begin with the raw amino-acid sequence, 391 residues long: tRNA-specific 2-thiouridylase MnmA (391 aa).

Residues 20-27 and Leu46 contribute to the ATP site; that span reads AMSGGVDS. The active-site Nucleophile is the Cys114. Residues Cys114 and Cys210 are joined by a disulfide bond. Gly138 is an ATP binding site. An interaction with tRNA region spans residues 160–162; the sequence is RDQ. The active-site Cysteine persulfide intermediate is Cys210.

The protein belongs to the MnmA/TRMU family.

It localises to the cytoplasm. It catalyses the reaction S-sulfanyl-L-cysteinyl-[protein] + uridine(34) in tRNA + AH2 + ATP = 2-thiouridine(34) in tRNA + L-cysteinyl-[protein] + A + AMP + diphosphate + H(+). Its function is as follows. Catalyzes the 2-thiolation of uridine at the wobble position (U34) of tRNA, leading to the formation of s(2)U34. In Bartonella bacilliformis (strain ATCC 35685 / KC583 / Herrer 020/F12,63), this protein is tRNA-specific 2-thiouridylase MnmA.